Here is a 96-residue protein sequence, read N- to C-terminus: MSDDENRGSHDLRMPDDDEVFAVVTNMLGANRVTVRCADGNERTARIPGRMQKRIWIREDDVVLVEPWDWQDEKGDITWRYEKSEADQLREEGRIR.

Positions G8–E82 constitute an S1-like domain.

Belongs to the eIF-1A family.

In terms of biological role, seems to be required for maximal rate of protein biosynthesis. Enhances ribosome dissociation into subunits and stabilizes the binding of the initiator Met-tRNA(I) to 40 S ribosomal subunits. In Haloquadratum walsbyi (strain DSM 16790 / HBSQ001), this protein is Translation initiation factor 1A 1.